The chain runs to 353 residues: tRNA-specific 2-thiouridylase MnmA 2 (353 aa).

6 to 13 provides a ligand contact to ATP; that stretch reads LLSGGVDS. Residues 92–94 form an interaction with target base in tRNA region; it reads NPD. C97 (nucleophile) is an active-site residue. C97 and C192 are oxidised to a cystine. G120 contributes to the ATP binding site. Positions 142-144 are interaction with tRNA; the sequence is KDQ. C192 functions as the Cysteine persulfide intermediate in the catalytic mechanism.

The protein belongs to the MnmA/TRMU family.

It localises to the cytoplasm. The enzyme catalyses S-sulfanyl-L-cysteinyl-[protein] + uridine(34) in tRNA + AH2 + ATP = 2-thiouridine(34) in tRNA + L-cysteinyl-[protein] + A + AMP + diphosphate + H(+). Functionally, catalyzes the 2-thiolation of uridine at the wobble position (U34) of tRNA, leading to the formation of s(2)U34. The chain is tRNA-specific 2-thiouridylase MnmA 2 from Bacteroides fragilis (strain YCH46).